Reading from the N-terminus, the 300-residue chain is Acetyl-coenzyme A carboxylase carboxyl transferase subunit beta 1 (300 aa).

The CoA carboxyltransferase N-terminal domain maps to 26–294 (MWVKCPSCGD…HTSAAQHVPA (269 aa)). Zn(2+) contacts are provided by cysteine 30, cysteine 33, cysteine 49, and cysteine 51. The C4-type zinc-finger motif lies at 30–51 (CPSCGDLIYTRQFSDNLKVCKC).

This sequence belongs to the AccD/PCCB family. As to quaternary structure, acetyl-CoA carboxylase is a heterohexamer composed of biotin carboxyl carrier protein (AccB), biotin carboxylase (AccC) and two subunits each of ACCase subunit alpha (AccA) and ACCase subunit beta (AccD). The cofactor is Zn(2+).

It is found in the cytoplasm. The enzyme catalyses N(6)-carboxybiotinyl-L-lysyl-[protein] + acetyl-CoA = N(6)-biotinyl-L-lysyl-[protein] + malonyl-CoA. Its pathway is lipid metabolism; malonyl-CoA biosynthesis; malonyl-CoA from acetyl-CoA: step 1/1. In terms of biological role, component of the acetyl coenzyme A carboxylase (ACC) complex. Biotin carboxylase (BC) catalyzes the carboxylation of biotin on its carrier protein (BCCP) and then the CO(2) group is transferred by the transcarboxylase to acetyl-CoA to form malonyl-CoA. The protein is Acetyl-coenzyme A carboxylase carboxyl transferase subunit beta 1 of Roseiflexus sp. (strain RS-1).